Consider the following 176-residue polypeptide: Cytochrome b (176 aa).

3 helical membrane passes run 33-53 (FGSL…FLAM), 77-98 (WLLR…YLHV), and 113-133 (WNMG…GYVL). Positions 83 and 97 each coordinate heme b.

This sequence belongs to the cytochrome b family. The cytochrome bc1 complex contains 11 subunits: 3 respiratory subunits (MT-CYB, CYC1 and UQCRFS1), 2 core proteins (UQCRC1 and UQCRC2) and 6 low-molecular weight proteins (UQCRH/QCR6, UQCRB/QCR7, UQCRQ/QCR8, UQCR10/QCR9, UQCR11/QCR10 and a cleavage product of UQCRFS1). This cytochrome bc1 complex then forms a dimer. Heme b serves as cofactor.

The protein localises to the mitochondrion inner membrane. Its function is as follows. Component of the ubiquinol-cytochrome c reductase complex (complex III or cytochrome b-c1 complex) that is part of the mitochondrial respiratory chain. The b-c1 complex mediates electron transfer from ubiquinol to cytochrome c. Contributes to the generation of a proton gradient across the mitochondrial membrane that is then used for ATP synthesis. The protein is Cytochrome b (MT-CYB) of Tomopeas ravum (Blunt-eared bat).